The following is a 244-amino-acid chain: Aspartate/glutamate leucyltransferase (244 aa).

The protein belongs to the R-transferase family. Bpt subfamily.

Its subcellular location is the cytoplasm. The catalysed reaction is N-terminal L-glutamyl-[protein] + L-leucyl-tRNA(Leu) = N-terminal L-leucyl-L-glutamyl-[protein] + tRNA(Leu) + H(+). The enzyme catalyses N-terminal L-aspartyl-[protein] + L-leucyl-tRNA(Leu) = N-terminal L-leucyl-L-aspartyl-[protein] + tRNA(Leu) + H(+). Functions in the N-end rule pathway of protein degradation where it conjugates Leu from its aminoacyl-tRNA to the N-termini of proteins containing an N-terminal aspartate or glutamate. This chain is Aspartate/glutamate leucyltransferase, found in Bordetella bronchiseptica (strain ATCC BAA-588 / NCTC 13252 / RB50) (Alcaligenes bronchisepticus).